The primary structure comprises 185 residues: Threonylcarbamoyl-AMP synthase (185 aa).

Residues 4 to 185 (SWRVQQAAQD…IATAQIVRAG (182 aa)) form the YrdC-like domain.

This sequence belongs to the SUA5 family. TsaC subfamily.

Its subcellular location is the cytoplasm. It catalyses the reaction L-threonine + hydrogencarbonate + ATP = L-threonylcarbamoyladenylate + diphosphate + H2O. In terms of biological role, required for the formation of a threonylcarbamoyl group on adenosine at position 37 (t(6)A37) in tRNAs that read codons beginning with adenine. Catalyzes the conversion of L-threonine, HCO(3)(-)/CO(2) and ATP to give threonylcarbamoyl-AMP (TC-AMP) as the acyladenylate intermediate, with the release of diphosphate. This is Threonylcarbamoyl-AMP synthase from Pseudomonas syringae pv. syringae (strain B728a).